A 195-amino-acid polypeptide reads, in one-letter code: Phosphoheptose isomerase (195 aa).

One can recognise an SIS domain in the interval 35–195; the sequence is LCVALYRGDK…EKEIFGDGVN (161 aa). 51–53 contacts substrate; it reads NGG. Residues histidine 60 and glutamate 64 each contribute to the Zn(2+) site. Substrate is bound by residues glutamate 64, 93–94, 119–121, serine 124, and glutamine 171; these read ND and STS. Zn(2+) contacts are provided by glutamine 171 and histidine 179.

It belongs to the SIS family. GmhA subfamily. Homotetramer. Requires Zn(2+) as cofactor.

Its subcellular location is the cytoplasm. It catalyses the reaction 2 D-sedoheptulose 7-phosphate = D-glycero-alpha-D-manno-heptose 7-phosphate + D-glycero-beta-D-manno-heptose 7-phosphate. It functions in the pathway carbohydrate biosynthesis; D-glycero-D-manno-heptose 7-phosphate biosynthesis; D-glycero-alpha-D-manno-heptose 7-phosphate and D-glycero-beta-D-manno-heptose 7-phosphate from sedoheptulose 7-phosphate: step 1/1. In terms of biological role, catalyzes the isomerization of sedoheptulose 7-phosphate in D-glycero-D-manno-heptose 7-phosphate. This is Phosphoheptose isomerase from Sulfurimonas denitrificans (strain ATCC 33889 / DSM 1251) (Thiomicrospira denitrificans (strain ATCC 33889 / DSM 1251)).